Consider the following 571-residue polypeptide: Proline--tRNA ligase (571 aa).

It belongs to the class-II aminoacyl-tRNA synthetase family. ProS type 1 subfamily. In terms of assembly, homodimer.

Its subcellular location is the cytoplasm. It catalyses the reaction tRNA(Pro) + L-proline + ATP = L-prolyl-tRNA(Pro) + AMP + diphosphate. Catalyzes the attachment of proline to tRNA(Pro) in a two-step reaction: proline is first activated by ATP to form Pro-AMP and then transferred to the acceptor end of tRNA(Pro). As ProRS can inadvertently accommodate and process non-cognate amino acids such as alanine and cysteine, to avoid such errors it has two additional distinct editing activities against alanine. One activity is designated as 'pretransfer' editing and involves the tRNA(Pro)-independent hydrolysis of activated Ala-AMP. The other activity is designated 'posttransfer' editing and involves deacylation of mischarged Ala-tRNA(Pro). The misacylated Cys-tRNA(Pro) is not edited by ProRS. The chain is Proline--tRNA ligase from Actinobacillus pleuropneumoniae serotype 7 (strain AP76).